The following is a 464-amino-acid chain: ATP synthase subunit beta (464 aa).

153-160 (GGAGVGKT) lines the ATP pocket.

The protein belongs to the ATPase alpha/beta chains family. As to quaternary structure, F-type ATPases have 2 components, CF(1) - the catalytic core - and CF(0) - the membrane proton channel. CF(1) has five subunits: alpha(3), beta(3), gamma(1), delta(1), epsilon(1). CF(0) has three main subunits: a(1), b(2) and c(9-12). The alpha and beta chains form an alternating ring which encloses part of the gamma chain. CF(1) is attached to CF(0) by a central stalk formed by the gamma and epsilon chains, while a peripheral stalk is formed by the delta and b chains.

It is found in the cell membrane. The catalysed reaction is ATP + H2O + 4 H(+)(in) = ADP + phosphate + 5 H(+)(out). In terms of biological role, produces ATP from ADP in the presence of a proton gradient across the membrane. The catalytic sites are hosted primarily by the beta subunits. The sequence is that of ATP synthase subunit beta from Alkaliphilus metalliredigens (strain QYMF).